A 204-amino-acid chain; its full sequence is ATP-dependent Clp protease proteolytic subunit 1 (204 aa).

Ser-97 (nucleophile) is an active-site residue. His-122 is a catalytic residue.

This sequence belongs to the peptidase S14 family. Fourteen ClpP subunits assemble into 2 heptameric rings which stack back to back to give a disk-like structure with a central cavity, resembling the structure of eukaryotic proteasomes.

The protein resides in the cytoplasm. The enzyme catalyses Hydrolysis of proteins to small peptides in the presence of ATP and magnesium. alpha-casein is the usual test substrate. In the absence of ATP, only oligopeptides shorter than five residues are hydrolyzed (such as succinyl-Leu-Tyr-|-NHMec, and Leu-Tyr-Leu-|-Tyr-Trp, in which cleavage of the -Tyr-|-Leu- and -Tyr-|-Trp bonds also occurs).. In terms of biological role, cleaves peptides in various proteins in a process that requires ATP hydrolysis. Has a chymotrypsin-like activity. Plays a major role in the degradation of misfolded proteins. The polypeptide is ATP-dependent Clp protease proteolytic subunit 1 (Nostoc sp. (strain PCC 7120 / SAG 25.82 / UTEX 2576)).